The chain runs to 393 residues: Proteasome-activating nucleotidase (393 aa).

Positions 14–53 (SDEVQLVRLLEEKIKSLQIEIENLRKELNYYKAEMEKMLS) form a coiled coil. Residues 178–183 (GTGKTM) and Y317 contribute to the ATP site. The tract at residues 391–393 (KYS) is docks into pockets in the proteasome alpha-ring to cause gate opening.

This sequence belongs to the AAA ATPase family. As to quaternary structure, homohexamer. The hexameric complex has a two-ring architecture resembling a top hat that caps the 20S proteasome core at one or both ends. Upon ATP-binding, the C-terminus of PAN interacts with the alpha-rings of the proteasome core by binding to the intersubunit pockets.

The protein localises to the cytoplasm. Functionally, ATPase which is responsible for recognizing, binding, unfolding and translocation of substrate proteins into the archaeal 20S proteasome core particle. Is essential for opening the gate of the 20S proteasome via an interaction with its C-terminus, thereby allowing substrate entry and access to the site of proteolysis. Thus, the C-termini of the proteasomal ATPase function like a 'key in a lock' to induce gate opening and therefore regulate proteolysis. Unfolding activity requires energy from ATP hydrolysis, whereas ATP binding alone promotes ATPase-20S proteasome association which triggers gate opening, and supports translocation of unfolded substrates. This chain is Proteasome-activating nucleotidase, found in Saccharolobus islandicus (strain M.16.27) (Sulfolobus islandicus).